Reading from the N-terminus, the 387-residue chain is Chorismate synthase (387 aa).

Positions 42 and 48 each coordinate NADP(+). Residues 131–133 (RSS), 251–252 (QA), Gly295, 310–314 (KPIPT), and Arg336 each bind FMN.

The protein belongs to the chorismate synthase family. In terms of assembly, homotetramer. FMNH2 serves as cofactor.

The catalysed reaction is 5-O-(1-carboxyvinyl)-3-phosphoshikimate = chorismate + phosphate. The protein operates within metabolic intermediate biosynthesis; chorismate biosynthesis; chorismate from D-erythrose 4-phosphate and phosphoenolpyruvate: step 7/7. Functionally, catalyzes the anti-1,4-elimination of the C-3 phosphate and the C-6 proR hydrogen from 5-enolpyruvylshikimate-3-phosphate (EPSP) to yield chorismate, which is the branch point compound that serves as the starting substrate for the three terminal pathways of aromatic amino acid biosynthesis. This reaction introduces a second double bond into the aromatic ring system. This Syntrophotalea carbinolica (strain DSM 2380 / NBRC 103641 / GraBd1) (Pelobacter carbinolicus) protein is Chorismate synthase.